We begin with the raw amino-acid sequence, 238 residues long: Small ribosomal subunit protein uS3 (238 aa).

Positions 39-109 constitute a KH type-2 domain; the sequence is IRTFINQQLA…TIKVNVVEVN (71 aa). Residues 215–238 form a disordered region; it reads EAVPREATRRSPQRRLPQFENRSN.

The protein belongs to the universal ribosomal protein uS3 family. As to quaternary structure, part of the 30S ribosomal subunit. Forms a tight complex with proteins S10 and S14.

Its function is as follows. Binds the lower part of the 30S subunit head. Binds mRNA in the 70S ribosome, positioning it for translation. The polypeptide is Small ribosomal subunit protein uS3 (Thermosynechococcus vestitus (strain NIES-2133 / IAM M-273 / BP-1)).